We begin with the raw amino-acid sequence, 248 residues long: Deoxyribose-phosphate aldolase (248 aa).

Aspartate 117 acts as the Proton donor/acceptor in catalysis. Lysine 179 acts as the Schiff-base intermediate with acetaldehyde in catalysis. Residue lysine 208 is the Proton donor/acceptor of the active site.

This sequence belongs to the DeoC/FbaB aldolase family. DeoC type 1 subfamily.

The protein localises to the cytoplasm. The catalysed reaction is 2-deoxy-D-ribose 5-phosphate = D-glyceraldehyde 3-phosphate + acetaldehyde. It participates in carbohydrate degradation; 2-deoxy-D-ribose 1-phosphate degradation; D-glyceraldehyde 3-phosphate and acetaldehyde from 2-deoxy-alpha-D-ribose 1-phosphate: step 2/2. In terms of biological role, catalyzes a reversible aldol reaction between acetaldehyde and D-glyceraldehyde 3-phosphate to generate 2-deoxy-D-ribose 5-phosphate. The polypeptide is Deoxyribose-phosphate aldolase (Thermotoga petrophila (strain ATCC BAA-488 / DSM 13995 / JCM 10881 / RKU-1)).